The sequence spans 442 residues: D-inositol 3-phosphate glycosyltransferase (442 aa).

Position 26 (His26) interacts with 1D-myo-inositol 3-phosphate. UDP-N-acetyl-alpha-D-glucosamine contacts are provided by residues 32 to 33 (QP) and Gly40. 1D-myo-inositol 3-phosphate-binding positions include 37–42 (DAGGMN), Lys95, Tyr128, Thr152, and Arg172. 3 residues coordinate UDP-N-acetyl-alpha-D-glucosamine: Arg246, Lys251, and Gln304. Mg(2+) contacts are provided by Tyr313, Arg314, and Ala316. Glu326 and Glu334 together coordinate UDP-N-acetyl-alpha-D-glucosamine. Mg(2+) is bound at residue Thr340.

This sequence belongs to the glycosyltransferase group 1 family. MshA subfamily. As to quaternary structure, homodimer.

It catalyses the reaction 1D-myo-inositol 3-phosphate + UDP-N-acetyl-alpha-D-glucosamine = 1D-myo-inositol 2-acetamido-2-deoxy-alpha-D-glucopyranoside 3-phosphate + UDP + H(+). Catalyzes the transfer of a N-acetyl-glucosamine moiety to 1D-myo-inositol 3-phosphate to produce 1D-myo-inositol 2-acetamido-2-deoxy-glucopyranoside 3-phosphate in the mycothiol biosynthesis pathway. The polypeptide is D-inositol 3-phosphate glycosyltransferase (Mycolicibacterium gilvum (strain PYR-GCK) (Mycobacterium gilvum (strain PYR-GCK))).